Consider the following 222-residue polypeptide: MLANSREELVEVFDALDAELDRLDEVSFEVLTTPERLRSLERLECLVRRLPAVGHTLINQLDTQASEEELGGTLCCALANRLRITKPDAALRIADAADLGPRRALTGEPLAPQLTATATAQRQGLIGEAHIKVIRALFRPPARRGGCVHPPGRRSRPGRQSRSISSRRAGPLRPAGHGLATPRRRPHRHRTRPQTRHHPEQPAIRRHVTAKWLPDPPSAGHL.

Residues 142 to 222 (ARRGGCVHPP…LPDPPSAGHL (81 aa)) are disordered. Residues 160–169 (QSRSISSRRA) show a composition bias toward low complexity. The segment covering 182–196 (PRRRPHRHRTRPQTR) has biased composition (basic residues).

This sequence belongs to the Rv1128c/1148c/1588c/1702c/1945/3466 family.

This is an uncharacterized protein from Mycobacterium tuberculosis (strain CDC 1551 / Oshkosh).